A 43-amino-acid polypeptide reads, in one-letter code: uncharacterized protein (43 aa).

The signal sequence occupies residues 1–22 (MKRKIIAIGIFFRLFIIHIHFS).

This is an uncharacterized protein from Schizosaccharomyces pombe (strain 972 / ATCC 24843) (Fission yeast).